Consider the following 1866-residue polypeptide: Protein strawberry notch homolog (1866 aa).

Low complexity predominate over residues 19-28 (QQSSPTPSTS). Disordered stretches follow at residues 19-63 (QQSS…HSSS), 132-151 (TAPT…IVPK), 156-253 (LFET…GLPI), 561-581 (GMAS…QKAK), and 1112-1308 (GLSG…ARGS). 2 stretches are compositionally biased toward polar residues: residues 37-63 (QSFS…HSSS) and 134-146 (PTVN…TPTV). The segment covering 161-176 (TADSPTPSGDTSTTAS) has biased composition (low complexity). Polar residues-rich tracts occupy residues 191–203 (DRQN…TARS) and 210–228 (TPST…LTQR). The segment covering 229–239 (SHTSSPASSAS) has biased composition (low complexity). Over residues 566–577 (RLQTTPQPLTKS) the composition is skewed to polar residues. Residues 1112 to 1126 (GLSGIGRSSMSSSTG) are compositionally biased toward low complexity. Residues 1142–1152 (DGSDDEVENDM) are compositionally biased toward acidic residues. Residues 1164 to 1177 (ESAREEAEGARTLE) are compositionally biased toward basic and acidic residues. Acidic residues predominate over residues 1194–1213 (SSSDDSDEEVVKDEDEDEEA). Basic and acidic residues-rich tracts occupy residues 1262–1281 (RDEE…EERR) and 1290–1304 (RRAE…EELQ).

This sequence belongs to the SBNO family. In terms of tissue distribution, expressed in the somatic gonad, neurons, hypodermal cells, seam cells, the excretory system, and intestinal cells (at protein level).

The protein localises to the nucleus. Functionally, transcriptional activator that functions upstream of the let-60/Ras and let-23/EGFR signaling pathways to positively regulate lin-3 expression and thereby promote vulval induction. Plays a role in excretory duct development. Plays a role in male tail development. This Caenorhabditis elegans protein is Protein strawberry notch homolog.